We begin with the raw amino-acid sequence, 61 residues long: Outer membrane lipoprotein YnbE (61 aa).

The signal sequence occupies residues 1 to 16 (MKILLAALTSSFMLVG). Cys17 carries N-palmitoyl cysteine lipidation. Cys17 carries S-diacylglycerol cysteine lipidation.

It belongs to the lipoprotein YnbE family. As to quaternary structure, interacts with the C-terminal region of the probable phospholipid transport protein YdbH.

The protein resides in the cell outer membrane. Its function is as follows. Involved in outer membrane lipid homeostasis. Interacts with the inner membrane protein YdbH to form a functional protein bridge connecting the inner and outer membranes of the cell. Is required for YdbH's function and may facilitate phospholipid transport through the periplasm. The polypeptide is Outer membrane lipoprotein YnbE (ynbE) (Escherichia coli O6:H1 (strain CFT073 / ATCC 700928 / UPEC)).